The primary structure comprises 302 residues: Ribosomal RNA small subunit methyltransferase H (302 aa).

Residues 36–38 (GGH), aspartate 56, phenylalanine 84, aspartate 99, and glutamine 106 contribute to the S-adenosyl-L-methionine site.

Belongs to the methyltransferase superfamily. RsmH family.

The protein localises to the cytoplasm. The catalysed reaction is cytidine(1402) in 16S rRNA + S-adenosyl-L-methionine = N(4)-methylcytidine(1402) in 16S rRNA + S-adenosyl-L-homocysteine + H(+). Its function is as follows. Specifically methylates the N4 position of cytidine in position 1402 (C1402) of 16S rRNA. In Flavobacterium johnsoniae (strain ATCC 17061 / DSM 2064 / JCM 8514 / BCRC 14874 / CCUG 350202 / NBRC 14942 / NCIMB 11054 / UW101) (Cytophaga johnsonae), this protein is Ribosomal RNA small subunit methyltransferase H.